Consider the following 209-residue polypeptide: Protein Sxy (209 aa).

Belongs to the Sxy/TfoX family.

Its function is as follows. Induces low levels of natural DNA uptake by inducing transcription of the competence genes (the CRP-S regulon) required for DNA transformation. Induction of the CRP-S regulon also requires Sxy-activated promoter (CRP-S), cAMP receptor protein (CRP) and cAMP. Induces CRP-S site-containing genes which are involved in genome maintenance and transcription or encoding transposases and toxin-antitoxin pairs. This Escherichia coli (strain K12) protein is Protein Sxy.